The primary structure comprises 118 residues: Large ribosomal subunit protein uL22 (118 aa).

This sequence belongs to the universal ribosomal protein uL22 family. Part of the 50S ribosomal subunit.

This protein binds specifically to 23S rRNA; its binding is stimulated by other ribosomal proteins, e.g. L4, L17, and L20. It is important during the early stages of 50S assembly. It makes multiple contacts with different domains of the 23S rRNA in the assembled 50S subunit and ribosome. In terms of biological role, the globular domain of the protein is located near the polypeptide exit tunnel on the outside of the subunit, while an extended beta-hairpin is found that lines the wall of the exit tunnel in the center of the 70S ribosome. This chain is Large ribosomal subunit protein uL22, found in Thermomicrobium roseum (strain ATCC 27502 / DSM 5159 / P-2).